The following is a 183-amino-acid chain: Capsid protein (183 aa).

The disordered stretch occupies residues 136–183 (NAPILSTLPETTVVRRRGRSPRRRTPSPRRRRSQSPRRRRSQSRESQC). Basic residues predominate over residues 149 to 176 (VRRRGRSPRRRTPSPRRRRSQSPRRRRS). A phosphoserine; by host mark is found at Ser-155, Ser-162, and Ser-170. One copy of the 1; half-length repeat lies at 155–161 (SPRRRTP). Residues 155 to 177 (SPRRRTPSPRRRRSQSPRRRRSQ) form a 3 X 8 AA repeats of S-P-R-R-R-[PR]-S-Q region. The short motif at 158–175 (RRTPSPRRRRSQSPRRRR) is the Bipartite nuclear localization signal element. 2 consecutive repeat copies span residues 162 to 169 (SPRRRRSQ) and 170 to 177 (SPRRRRSQ). An RNA binding region spans residues 177–183 (QSRESQC).

It belongs to the orthohepadnavirus core antigen family. As to quaternary structure, homodimerizes, then multimerizes. Interacts with cytosol exposed regions of viral L glycoprotein present in the reticulum-to-Golgi compartment. Interacts with human FLNB. Phosphorylated form interacts with host importin alpha; this interaction depends on the exposure of the NLS, which itself depends upon genome maturation and/or phosphorylation of the capsid protein. Interacts with host NUP153. In terms of processing, phosphorylated by host SRPK1, SRPK2, and maybe protein kinase C or GAPDH. Phosphorylation is critical for pregenomic RNA packaging. Protein kinase C phosphorylation is stimulated by HBx protein and may play a role in transport of the viral genome to the nucleus at the late step during the viral replication cycle.

The protein resides in the virion. Its subcellular location is the host cytoplasm. Self assembles to form an icosahedral capsid. Most capsids appear to be large particles with an icosahedral symmetry of T=4 and consist of 240 copies of capsid protein, though a fraction forms smaller T=3 particles consisting of 180 capsid proteins. Entering capsids are transported along microtubules to the nucleus. Phosphorylation of the capsid is thought to induce exposure of nuclear localization signal in the C-terminal portion of the capsid protein that allows binding to the nuclear pore complex via the importin (karyopherin-) alpha and beta. Capsids are imported in intact form through the nuclear pore into the nuclear basket, where it probably binds NUP153. Only capsids that contain the mature viral genome can release the viral DNA and capsid protein into the nucleoplasm. Immature capsids get stuck in the basket. Capsids encapsulate the pre-genomic RNA and the P protein. Pre-genomic RNA is reverse-transcribed into DNA while the capsid is still in the cytoplasm. The capsid can then either be directed to the nucleus, providing more genomes for transcription, or bud through the endoplasmic reticulum to provide new virions. The sequence is that of Capsid protein from Homo sapiens (Human).